We begin with the raw amino-acid sequence, 353 residues long: Photosystem II D2 protein (353 aa).

Position 2 is an N-acetylthreonine (T2). T2 is subject to Phosphothreonine. A helical transmembrane segment spans residues C41–T61. H118 is a binding site for chlorophyll a. The chain crosses the membrane as a helical span at residues G125–P141. Pheophytin a contacts are provided by Q130 and N143. A helical transmembrane segment spans residues V153–S166. H198 is a binding site for chlorophyll a. A helical transmembrane segment spans residues A208–D228. Residues H215 and F262 each contribute to the a plastoquinone site. H215 is a binding site for Fe cation. Fe cation is bound at residue H269. A helical membrane pass occupies residues G279–R295.

The protein belongs to the reaction center PufL/M/PsbA/D family. In terms of assembly, PSII is composed of 1 copy each of membrane proteins PsbA, PsbB, PsbC, PsbD, PsbE, PsbF, PsbH, PsbI, PsbJ, PsbK, PsbL, PsbM, PsbT, PsbX, PsbY, PsbZ, Psb30/Ycf12, at least 3 peripheral proteins of the oxygen-evolving complex and a large number of cofactors. It forms dimeric complexes. It depends on The D1/D2 heterodimer binds P680, chlorophylls that are the primary electron donor of PSII, and subsequent electron acceptors. It shares a non-heme iron and each subunit binds pheophytin, quinone, additional chlorophylls, carotenoids and lipids. There is also a Cl(-1) ion associated with D1 and D2, which is required for oxygen evolution. The PSII complex binds additional chlorophylls, carotenoids and specific lipids. as a cofactor.

Its subcellular location is the plastid. It is found in the chloroplast thylakoid membrane. It catalyses the reaction 2 a plastoquinone + 4 hnu + 2 H2O = 2 a plastoquinol + O2. Functionally, photosystem II (PSII) is a light-driven water:plastoquinone oxidoreductase that uses light energy to abstract electrons from H(2)O, generating O(2) and a proton gradient subsequently used for ATP formation. It consists of a core antenna complex that captures photons, and an electron transfer chain that converts photonic excitation into a charge separation. The D1/D2 (PsbA/PsbD) reaction center heterodimer binds P680, the primary electron donor of PSII as well as several subsequent electron acceptors. D2 is needed for assembly of a stable PSII complex. This Carica papaya (Papaya) protein is Photosystem II D2 protein.